The primary structure comprises 314 residues: Probable cell division protein WhiA (314 aa).

Residues 277–311 (TLKELGEKMPSGAISKSGINHRLRKLNQLAEGYQQ) constitute a DNA-binding region (H-T-H motif).

This sequence belongs to the WhiA family.

Involved in cell division and chromosome segregation. The polypeptide is Probable cell division protein WhiA (Latilactobacillus sakei subsp. sakei (strain 23K) (Lactobacillus sakei subsp. sakei)).